The chain runs to 278 residues: Biotin synthase (278 aa).

Residues 1 to 227 form the Radical SAM core domain; sequence MQIMLCAISN…QSVVMVAGGR (227 aa). Residues Cys16, Cys20, and Cys23 each contribute to the [4Fe-4S] cluster site. The [2Fe-2S] cluster site is built by Cys60, Cys95, and Cys153.

Belongs to the radical SAM superfamily. Biotin synthase family. As to quaternary structure, homodimer. It depends on [4Fe-4S] cluster as a cofactor. Requires [2Fe-2S] cluster as cofactor.

It carries out the reaction (4R,5S)-dethiobiotin + (sulfur carrier)-SH + 2 reduced [2Fe-2S]-[ferredoxin] + 2 S-adenosyl-L-methionine = (sulfur carrier)-H + biotin + 2 5'-deoxyadenosine + 2 L-methionine + 2 oxidized [2Fe-2S]-[ferredoxin]. The protein operates within cofactor biosynthesis; biotin biosynthesis; biotin from 7,8-diaminononanoate: step 2/2. Functionally, catalyzes the conversion of dethiobiotin (DTB) to biotin by the insertion of a sulfur atom into dethiobiotin via a radical-based mechanism. This is Biotin synthase from Campylobacter jejuni (strain RM1221).